The primary structure comprises 245 residues: tRNA pseudouridine synthase A (245 aa).

Aspartate 52 functions as the Nucleophile in the catalytic mechanism. Residue tyrosine 111 participates in substrate binding.

This sequence belongs to the tRNA pseudouridine synthase TruA family. In terms of assembly, homodimer.

It carries out the reaction uridine(38/39/40) in tRNA = pseudouridine(38/39/40) in tRNA. In terms of biological role, formation of pseudouridine at positions 38, 39 and 40 in the anticodon stem and loop of transfer RNAs. This is tRNA pseudouridine synthase A from Xanthobacter autotrophicus (strain ATCC BAA-1158 / Py2).